A 1007-amino-acid chain; its full sequence is Protocadherin alpha-C2 (1007 aa).

The first 42 residues, 1-42, serve as a signal peptide directing secretion; sequence MEQAGTRPAATEHPRLRRPMPWLLLLPLLLLLLLLLPGPAAS. Cadherin domains are found at residues 43–148, 149–257, 258–365, 374–469, and 470–579; these read QLRY…SPRF, PRPN…SPAF, DQST…APEV, VPEN…PPSF, and LEDS…APHI. Over 43-708 the chain is Extracellular; sequence QLRYSVPEEQ…RTYSEITLYL (666 aa). N-linked (GlcNAc...) asparagine glycosylation is found at asparagine 280 and asparagine 436. N-linked (GlcNAc...) asparagine glycosylation is found at asparagine 586 and asparagine 657. Positions 594–691 constitute a Cadherin 6 domain; that stretch reads GPRTAPAGYL…DRVSKILPDT (98 aa). The helical transmembrane segment at 709 to 729 threads the bilayer; sequence IIALSTVSFIFLLTIIILSII. The Cytoplasmic segment spans residues 730 to 1007; it reads KCYRYTAYGT…GNSTTDNSDQ (278 aa). PXXP repeat units lie at residues 856–859, 889–892, 930–933, and 948–951; these read PRQP, PGGP, PGNP, and PGSP. Residues 856-951 are 4 X 4 AA repeats of P-X-X-P; the sequence is PRQPNPDWRY…PDKFIIPGSP (96 aa). Positions 885-1007 are disordered; the sequence is LRAGPGGPDQ…GNSTTDNSDQ (123 aa). The segment covering 966 to 980 has biased composition (basic and acidic residues); the sequence is DKSDFITFGKKEETK.

The protein resides in the cell membrane. Potential calcium-dependent cell-adhesion protein. May be involved in the establishment and maintenance of specific neuronal connections in the brain. The sequence is that of Protocadherin alpha-C2 (PCDHAC2) from Pan troglodytes (Chimpanzee).